The chain runs to 335 residues: Nucleoid-associated protein PSEEN4449 (335 aa).

The protein belongs to the YejK family.

The protein resides in the cytoplasm. It is found in the nucleoid. The chain is Nucleoid-associated protein PSEEN4449 from Pseudomonas entomophila (strain L48).